The primary structure comprises 203 residues: uncharacterized protein (203 aa).

This is an uncharacterized protein from Magallana gigas (Pacific oyster).